A 325-amino-acid polypeptide reads, in one-letter code: Solute carrier family 35 member B1 (325 aa).

8 helical membrane passes run 18-38 (PVCFLGVFACYFYYGILQESI), 54-74 (FALSLVFIQCVINAAFAKLLI), 88-108 (WLYAACSLSYLGAMVSSNSAL), 139-159 (YPLAKYLCVLLIVTGVALFMY), 171-191 (IFGYGELLLLLSLTLDGLTGV), 213-233 (LWSTLFLGAGILFTGELWEFL), 246-266 (ILLFGLTSALGQSFIFMTVVY), and 288-308 (VILFANPISTMQWVGTVLVFL). Residues 321 to 325 (KKTSH) carry the Di-lysine motif motif.

It belongs to the nucleotide-sugar transporter family. SLC35B subfamily.

It localises to the endoplasmic reticulum membrane. In terms of biological role, probable sugar transporter. This chain is Solute carrier family 35 member B1 (SLC35B1), found in Gallus gallus (Chicken).